The primary structure comprises 150 residues: Nascent polypeptide-associated complex subunit beta (150 aa).

Disordered stretches follow at residues 1–45 (MADV…LQQS) and 123–150 (YQNMQQKKDDDDEIPDLVAGESFENKVE). The span at 23–32 (TPRRKVKRAP) shows a compositional bias: basic residues. The NAC-A/B domain maps to 36–101 (GADDKKLQQS…GEDKELTELV (66 aa)).

The protein belongs to the NAC-beta family. In terms of assembly, part of the nascent polypeptide-associated complex (NAC), consisting of EGD2 and EGD1. NAC associates with ribosomes via EGD1.

The protein localises to the cytoplasm. Its subcellular location is the nucleus. In terms of biological role, component of the nascent polypeptide-associated complex (NAC), a dynamic component of the ribosomal exit tunnel, protecting the emerging polypeptides from interaction with other cytoplasmic proteins to ensure appropriate nascent protein targeting. The NAC complex also promotes mitochondrial protein import by enhancing productive ribosome interactions with the outer mitochondrial membrane and blocks the inappropriate interaction of ribosomes translating non-secretory nascent polypeptides with translocation sites in the membrane of the endoplasmic reticulum. EGD1 may act as a transcription factor that exert a negative effect on the expression of several genes that are transcribed by RNA polymerase II. This chain is Nascent polypeptide-associated complex subunit beta (EGD1), found in Chaetomium globosum (strain ATCC 6205 / CBS 148.51 / DSM 1962 / NBRC 6347 / NRRL 1970) (Soil fungus).